Reading from the N-terminus, the 615-residue chain is Deoxyribodipyrimidine photo-lyase (615 aa).

Positions 1-53 (MAPSKRKASAPPQTSHVNGNPSADKKRKTTTDAPPTNPNTSSDPLRAPHPFYK) are disordered. The span at 11-21 (PPQTSHVNGNP) shows a compositional bias: polar residues. Residues 31–40 (TDAPPTNPNT) show a composition bias toward low complexity. Residues 108-249 (QAVVHWFKMD…AADVVHDTCV (142 aa)) form the Photolyase/cryptochrome alpha/beta domain. Position 352 (Tyr-352) interacts with FAD. Position 356 (Arg-356) interacts with DNA. An FAD-binding site is contributed by 364–368 (TSNLS). Interaction with DNA stretches follow at residues 407-414 (EVAWRDFY) and 474-475 (NR). 505–507 (DGD) provides a ligand contact to FAD. Residue Gln-537 participates in DNA binding.

This sequence belongs to the DNA photolyase class-1 family. In terms of assembly, monomer. Requires FAD as cofactor. It depends on (6R)-5,10-methylene-5,6,7,8-tetrahydrofolate as a cofactor.

The catalysed reaction is cyclobutadipyrimidine (in DNA) = 2 pyrimidine residues (in DNA).. In terms of biological role, involved in repair of UV radiation-induced DNA damage. Catalyzes the light-dependent monomerization (300-600 nm) of cyclobutyl pyrimidine dimers (in cis-syn configuration), which are formed between adjacent bases on the same DNA strand upon exposure to ultraviolet radiation. This Neurospora crassa (strain ATCC 24698 / 74-OR23-1A / CBS 708.71 / DSM 1257 / FGSC 987) protein is Deoxyribodipyrimidine photo-lyase (phr).